The sequence spans 480 residues: Serine carboxypeptidase-like 35 (480 aa).

The first 20 residues, 1-20 (MKKNALWLLCILVLPAIACG), serve as a signal peptide directing secretion. 2 N-linked (GlcNAc...) asparagine glycosylation sites follow: N79 and N146. Intrachain disulfides connect C95–C363, C257–C270, and C294–C331. The active site involves S188. N-linked (GlcNAc...) asparagine glycosylation occurs at N265. An N-linked (GlcNAc...) asparagine glycan is attached at N352. Active-site residues include D399 and H452.

The protein belongs to the peptidase S10 family. As to expression, expressed in seedlings, flowers and siliques.

The protein localises to the secreted. Probable carboxypeptidase. The chain is Serine carboxypeptidase-like 35 (SCPL35) from Arabidopsis thaliana (Mouse-ear cress).